The sequence spans 481 residues: Zinc metalloproteinase/disintegrin (481 aa).

The N-terminal stretch at 1–20 (MIQVLLVTICLAVFPYQGSS) is a signal peptide. A propeptide spanning residues 21-190 (IILESGNVDD…KASQLYLTPE (170 aa)) is cleaved from the precursor. The 196-residue stretch at 197–392 (RYIKLAIVVD…DNPQCILNAP (196 aa)) folds into the Peptidase M12B domain. Disulfide bonds link Cys308–Cys387, Cys349–Cys371, and Cys351–Cys354. His333 lines the Zn(2+) pocket. Residue Glu334 is part of the active site. 2 residues coordinate Zn(2+): His337 and His343. The propeptide occupies 393–408 (LRTDTVSTPVSGNEFL). The Disintegrin domain maps to 400–481 (TPVSGNEFLE…GDCPRNPFHA (82 aa)). Cystine bridges form between Cys414-Cys429, Cys416-Cys424, Cys423-Cys446, Cys437-Cys443, Cys442-Cys467, and Cys455-Cys474. Positions 459-461 (RGD) match the Cell attachment site motif.

It belongs to the venom metalloproteinase (M12B) family. P-II subfamily. P-IIa sub-subfamily. Monomer. Zn(2+) serves as cofactor. As to expression, expressed by the venom gland.

It localises to the secreted. Functionally, impairs hemostasis in the envenomed animal. In terms of biological role, disintegrin elegantin-2a-f: inhibits platelet aggregation induced by ADP, thrombin, platelet-activating factor and collagen. Acts by inhibiting fibrinogen interaction with platelet receptors GPIIb/GPIIIa (ITGA2B/ITGB3). The polypeptide is Zinc metalloproteinase/disintegrin (Protobothrops elegans (Elegant pitviper)).